Consider the following 291-residue polypeptide: Lipoyl synthase (291 aa).

Positions 36, 41, 47, 62, 66, 69, and 275 each coordinate [4Fe-4S] cluster. The 217-residue stretch at 48–264 (FSKKTATFLI…KEFAISIGFK (217 aa)) folds into the Radical SAM core domain.

It belongs to the radical SAM superfamily. Lipoyl synthase family. [4Fe-4S] cluster is required as a cofactor.

It localises to the cytoplasm. The catalysed reaction is [[Fe-S] cluster scaffold protein carrying a second [4Fe-4S](2+) cluster] + N(6)-octanoyl-L-lysyl-[protein] + 2 oxidized [2Fe-2S]-[ferredoxin] + 2 S-adenosyl-L-methionine + 4 H(+) = [[Fe-S] cluster scaffold protein] + N(6)-[(R)-dihydrolipoyl]-L-lysyl-[protein] + 4 Fe(3+) + 2 hydrogen sulfide + 2 5'-deoxyadenosine + 2 L-methionine + 2 reduced [2Fe-2S]-[ferredoxin]. It functions in the pathway protein modification; protein lipoylation via endogenous pathway; protein N(6)-(lipoyl)lysine from octanoyl-[acyl-carrier-protein]: step 2/2. Catalyzes the radical-mediated insertion of two sulfur atoms into the C-6 and C-8 positions of the octanoyl moiety bound to the lipoyl domains of lipoate-dependent enzymes, thereby converting the octanoylated domains into lipoylated derivatives. In Caldicellulosiruptor bescii (strain ATCC BAA-1888 / DSM 6725 / KCTC 15123 / Z-1320) (Anaerocellum thermophilum), this protein is Lipoyl synthase.